A 174-amino-acid chain; its full sequence is Co-chaperone protein HscB homolog (174 aa).

Residues 2–74 (NYFELFKFPP…IRRAEHMLSL (73 aa)) form the J domain.

It belongs to the HscB family. Interacts with HscA and stimulates its ATPase activity.

Functionally, co-chaperone involved in the maturation of iron-sulfur cluster-containing proteins. Seems to help targeting proteins to be folded toward HscA. The chain is Co-chaperone protein HscB homolog from Shewanella oneidensis (strain ATCC 700550 / JCM 31522 / CIP 106686 / LMG 19005 / NCIMB 14063 / MR-1).